Reading from the N-terminus, the 182-residue chain is uncharacterized protein (182 aa).

Disordered stretches follow at residues 1–73 (MMSG…YRSL) and 105–182 (SMST…HLNR). Low complexity-rich tracts occupy residues 43–68 (RPSP…ETSS) and 105–121 (SMST…SPVT). The span at 122–131 (APAPPPPPTS) shows a compositional bias: pro residues.

This is an uncharacterized protein from Caenorhabditis elegans.